Here is a 112-residue protein sequence, read N- to C-terminus: uncharacterized protein (112 aa).

Residues 1–27 are disordered; sequence MIASIGDSAEPPLRRTRRAQQQDRPPT.

This is an uncharacterized protein from Orgyia pseudotsugata multicapsid polyhedrosis virus (OpMNPV).